A 114-amino-acid polypeptide reads, in one-letter code: uncharacterized protein (114 aa).

To E.coli YggL.

This is an uncharacterized protein from Haemophilus influenzae (strain ATCC 51907 / DSM 11121 / KW20 / Rd).